The sequence spans 184 residues: Ribosome maturation factor RimP (184 aa).

This sequence belongs to the RimP family.

It localises to the cytoplasm. Its function is as follows. Required for maturation of 30S ribosomal subunits. The polypeptide is Ribosome maturation factor RimP (Corynebacterium diphtheriae (strain ATCC 700971 / NCTC 13129 / Biotype gravis)).